A 436-amino-acid chain; its full sequence is T-box transcription factor TBX6 (436 aa).

Positions 100-273 form a DNA-binding region, T-box; that stretch reads LWKEFSSVGT…ANPFAKGFRE (174 aa). The span at 271-284 shows a compositional bias: basic and acidic residues; the sequence is FRENGRNCKRERDA. Disordered stretches follow at residues 271-339 and 360-379; these read FREN…APAP and PSHL…SGRS. Low complexity predominate over residues 325 to 339; the sequence is EQAPAPGEATAAPAP.

In terms of assembly, forms a dimeric complex with DNA (in vitro). In terms of tissue distribution, expressed in fetal tail bud, posterior spinal tissue, intervertebral disk and testis. Also expressed in adult testis, kidney, lung, muscle and thymus.

The protein localises to the nucleus. Functionally, T-box transcription factor that plays an essential role in the determination of the fate of axial stem cells: neural vs mesodermal. Acts in part by down-regulating, a specific enhancer (N1) of SOX2, to inhibit neural development. Seems to play also an essential role in left/right axis determination and acts through effects on Notch signaling around the node as well as through an effect on the morphology and motility of the nodal cilia. The polypeptide is T-box transcription factor TBX6 (TBX6) (Homo sapiens (Human)).